Reading from the N-terminus, the 301-residue chain is Type II restriction enzyme BslI subunit beta (301 aa).

The segment at 62 to 82 adopts a CHC2-type zinc-finger fold; that stretch reads CPDGHTKWNQNLTKEMTCSEC.

Heterotetramer of two alpha and two beta subunits. The alpha subunit is believed to be responsible for DNA recognition, while the beta subunit is thought to mediate cleavage. It depends on Zn(2+) as a cofactor.

The enzyme catalyses Endonucleolytic cleavage of DNA to give specific double-stranded fragments with terminal 5'-phosphates.. In terms of biological role, a P subtype restriction enzyme that recognizes the double-stranded sequence 5'-CCN(7)GG-3' and cleaves after N-7. The protein is Type II restriction enzyme BslI subunit beta of Bacillus sp. (strain NEB-606).